Consider the following 338-residue polypeptide: Inositol 2-dehydrogenase 3 (338 aa).

The protein belongs to the Gfo/Idh/MocA family. In terms of assembly, homotetramer.

It catalyses the reaction myo-inositol + NAD(+) = scyllo-inosose + NADH + H(+). Involved in the oxidation of myo-inositol (MI) to 2-keto-myo-inositol (2KMI or 2-inosose). The polypeptide is Inositol 2-dehydrogenase 3 (Saccharopolyspora erythraea (strain ATCC 11635 / DSM 40517 / JCM 4748 / NBRC 13426 / NCIMB 8594 / NRRL 2338)).